Here is a 156-residue protein sequence, read N- to C-terminus: Keratin-associated protein 13-4 (156 aa).

Repeat copies occupy residues 37 to 46 (CQLGSSLYRN), 47 to 56 (CQKTCWEPTS), 57 to 66 (CRKSCYRRRT), and 73 to 82 (CQTTCSRSLG). Residues 37 to 82 (CQLGSSLYRNCQKTCWEPTSCRKSCYRRRTSMLCSPCQTTCSRSLG) are 4 X 10 AA approximate repeats.

The protein belongs to the PMG family. In terms of assembly, interacts with hair keratins.

In terms of biological role, in the hair cortex, hair keratin intermediate filaments are embedded in an interfilamentous matrix, consisting of hair keratin-associated proteins (KRTAP), which are essential for the formation of a rigid and resistant hair shaft through their extensive disulfide bond cross-linking with abundant cysteine residues of hair keratins. The matrix proteins include the high-sulfur and high-glycine-tyrosine keratins. The polypeptide is Keratin-associated protein 13-4 (KRTAP13-4) (Macaca fascicularis (Crab-eating macaque)).